The sequence spans 150 residues: UPF0208 membrane protein VP2081 (150 aa).

2 consecutive transmembrane segments (helical) span residues 42 to 62 (FGIK…MAFN) and 70 to 90 (SIVV…WLGA).

Belongs to the UPF0208 family.

The protein resides in the cell inner membrane. The protein is UPF0208 membrane protein VP2081 of Vibrio parahaemolyticus serotype O3:K6 (strain RIMD 2210633).